A 788-amino-acid chain; its full sequence is E3 ubiquitin-protein ligase SspH2 (788 aa).

The interval 1–481 (MPFHIGSGCL…PGYSGPIIRF (481 aa)) is interaction with host membrane and with target proteins. 12 LRR repeats span residues 223–242 (HITT…ALPP), 243–264 (ELRT…PPGL), 265–282 (LELS…ALPS), 283–302 (GLCK…VLPP), 303–324 (GLQE…PSEL), 325–342 (CKLW…MLPS), 343–364 (GLQE…PSEL), 365–382 (YKLW…ALPS), 383–404 (GLKE…PSEL), 405–422 (KELM…MLPS), 423–445 (GLLS…IHLS), and 446–466 (SETT…QALR). The tract at residues 482–491 (DMAGASAPRE) is linker. Residues 492–788 (TRALHLAAAD…SYLNVQWRRN (297 aa)) are E3 ubiquitin-protein ligase catalytic domain. The NEL domain maps to 494-788 (ALHLAAADWL…SYLNVQWRRN (295 aa)). Cysteine 580 serves as the catalytic Glycyl thioester intermediate.

It belongs to the LRR-containing bacterial E3 ligase family. Ubiquitinated in the presence of host E1 ubiquitin-activating enzyme UBA1, E2 ubiquitin-conjugating enzyme UBE2D2 and ubiquitin.

It localises to the secreted. It is found in the host cytoplasm. The protein localises to the host apical cell membrane. The catalysed reaction is S-ubiquitinyl-[E2 ubiquitin-conjugating enzyme]-L-cysteine + [acceptor protein]-L-lysine = [E2 ubiquitin-conjugating enzyme]-L-cysteine + N(6)-ubiquitinyl-[acceptor protein]-L-lysine.. Exists in an autoinhibited state in the absence of substrate protein, due to interactions of the leucine-rich repeat domain with the catalytic domain. Is activated upon binding to a substrate protein. Functionally, effector proteins function to alter host cell physiology and promote bacterial survival in host tissues. This protein is an E3 ubiquitin ligase that interferes with host's ubiquitination pathway. The protein is E3 ubiquitin-protein ligase SspH2 (sspH2) of Salmonella typhimurium (strain LT2 / SGSC1412 / ATCC 700720).